The sequence spans 108 residues: ATP synthase peripheral stalk subunit F6, mitochondrial (108 aa).

The N-terminal 32 residues, 1-32 (MTVQRIFRLSSVLRSAVSVHLRRNIGVTAVAF), are a transit peptide targeting the mitochondrion. Residues Lys41, Lys46, and Lys79 each carry the N6-acetyllysine modification. N6-acetyllysine; alternate is present on residues Lys84 and Lys99. Lys84 and Lys99 each carry N6-succinyllysine; alternate. Lys105 carries the post-translational modification N6-acetyllysine. Ser108 carries the phosphoserine modification.

The protein belongs to the eukaryotic ATPase subunit F6 family. Component of the ATP synthase complex composed at least of ATP5F1A/subunit alpha, ATP5F1B/subunit beta, ATP5MC1/subunit c (homooctomer), MT-ATP6/subunit a, MT-ATP8/subunit 8, ATP5ME/subunit e, ATP5MF/subunit f, ATP5MG/subunit g, ATP5MK/subunit k, ATP5MJ/subunit j, ATP5F1C/subunit gamma, ATP5F1D/subunit delta, ATP5F1E/subunit epsilon, ATP5PF/subunit F6, ATP5PB/subunit b, ATP5PD/subunit d, ATP5PO/subunit OSCP. ATP synthase complex consists of a soluble F(1) head domain (subunits alpha(3) and beta(3)) - the catalytic core - and a membrane F(0) domain - the membrane proton channel (subunits c, a, 8, e, f, g, k and j). These two domains are linked by a central stalk (subunits gamma, delta, and epsilon) rotating inside the F1 region and a stationary peripheral stalk (subunits F6, b, d, and OSCP).

It localises to the mitochondrion. The protein resides in the mitochondrion inner membrane. In terms of biological role, subunit F6, of the mitochondrial membrane ATP synthase complex (F(1)F(0) ATP synthase or Complex V) that produces ATP from ADP in the presence of a proton gradient across the membrane which is generated by electron transport complexes of the respiratory chain. ATP synthase complex consist of a soluble F(1) head domain - the catalytic core - and a membrane F(1) domain - the membrane proton channel. These two domains are linked by a central stalk rotating inside the F(1) region and a stationary peripheral stalk. During catalysis, ATP synthesis in the catalytic domain of F(1) is coupled via a rotary mechanism of the central stalk subunits to proton translocation. In vivo, can only synthesize ATP although its ATP hydrolase activity can be activated artificially in vitro. Part of the complex F(0) domain. Part of the complex F(0) domain and the peripheric stalk, which acts as a stator to hold the catalytic alpha(3)beta(3) subcomplex and subunit a/ATP6 static relative to the rotary elements. In Rattus norvegicus (Rat), this protein is ATP synthase peripheral stalk subunit F6, mitochondrial.